Consider the following 375-residue polypeptide: All-trans-retinol dehydrogenase [NAD(+)] ADH1B (375 aa).

At Ser-2 the chain carries N-acetylserine. The residue at position 23 (Ser-23) is a Phosphoserine. Tyr-35 carries the phosphotyrosine modification. Zn(2+) is bound by residues Cys-47, His-68, Cys-98, Cys-101, Cys-104, Cys-112, and Cys-175. NAD(+)-binding positions include 200 to 205, Asp-224, Lys-229, 293 to 295, and Arg-370; these read GLGGVG and VGV.

Belongs to the zinc-containing alcohol dehydrogenase family. Homodimer or heterodimer of closely related subunits. It depends on Zn(2+) as a cofactor.

The protein localises to the cytoplasm. It catalyses the reaction all-trans-retinol + NAD(+) = all-trans-retinal + NADH + H(+). It carries out the reaction all-trans-4-hydroxyretinol + NAD(+) = all-trans-4-hydroxyretinal + NADH + H(+). The enzyme catalyses all-trans-4-oxoretinol + NAD(+) = all-trans-4-oxoretinal + NADH + H(+). Catalyzes the NAD-dependent oxidation of all-trans-retinol and its derivatives such as all-trans-4-hydroxyretinol and may participate in retinoid metabolism. In vitro can also catalyze the NADH-dependent reduction of all-trans-retinal and its derivatives such as all-trans-4-oxoretinal. Catalyzes in the oxidative direction with higher efficiency. Has the same affinity for all-trans-4-hydroxyretinol and all-trans-4-oxoretinal. This Pan troglodytes (Chimpanzee) protein is All-trans-retinol dehydrogenase [NAD(+)] ADH1B.